Consider the following 351-residue polypeptide: Histidinol-phosphate aminotransferase (351 aa).

Residues 1-26 (MRFRAELEPLSPYNPPRASQEAAAER) form a disordered region. Position 223 is an N6-(pyridoxal phosphate)lysine (lysine 223).

Belongs to the class-II pyridoxal-phosphate-dependent aminotransferase family. Histidinol-phosphate aminotransferase subfamily. Homodimer. Pyridoxal 5'-phosphate serves as cofactor.

It carries out the reaction L-histidinol phosphate + 2-oxoglutarate = 3-(imidazol-4-yl)-2-oxopropyl phosphate + L-glutamate. Its pathway is amino-acid biosynthesis; L-histidine biosynthesis; L-histidine from 5-phospho-alpha-D-ribose 1-diphosphate: step 7/9. This Rubrobacter xylanophilus (strain DSM 9941 / JCM 11954 / NBRC 16129 / PRD-1) protein is Histidinol-phosphate aminotransferase.